Here is a 121-residue protein sequence, read N- to C-terminus: MKRINFSRAKQRALRAKRLHVKIRNLQLAANKPVLVITKTNAHIWAQLICYNKNITLASSSSVQLDLQNGNKDNARLVGADIAKKALAQGFKQVIFNKNGAKYHGRIKALADAAREAGLEF.

The protein belongs to the universal ribosomal protein uL18 family. Part of the 50S ribosomal subunit; part of the 5S rRNA/L5/L18/L25 subcomplex. Contacts the 5S and 23S rRNAs.

Its function is as follows. This is one of the proteins that bind and probably mediate the attachment of the 5S RNA into the large ribosomal subunit, where it forms part of the central protuberance. The sequence is that of Large ribosomal subunit protein uL18 from Ureaplasma urealyticum serovar 10 (strain ATCC 33699 / Western).